Reading from the N-terminus, the 369-residue chain is UDP-3-O-(3-hydroxymyristoyl)glucosamine N-acyltransferase (369 aa).

Catalysis depends on His-240, which acts as the Proton acceptor.

This sequence belongs to the transferase hexapeptide repeat family. LpxD subfamily. In terms of assembly, homotrimer.

The catalysed reaction is a UDP-3-O-[(3R)-3-hydroxyacyl]-alpha-D-glucosamine + a (3R)-hydroxyacyl-[ACP] = a UDP-2-N,3-O-bis[(3R)-3-hydroxyacyl]-alpha-D-glucosamine + holo-[ACP] + H(+). The enzyme catalyses UDP-3-O-[(3R)-3-hydroxytetradecanoyl]-alpha-D-glucosamine + (3R)-hydroxytetradecanoyl-[ACP] = UDP-2-N,3-O-bis[(3R)-3-hydroxytetradecanoyl]-alpha-D-glucosamine + holo-[ACP] + H(+). It functions in the pathway glycolipid biosynthesis; lipid IV(A) biosynthesis; lipid IV(A) from (3R)-3-hydroxytetradecanoyl-[acyl-carrier-protein] and UDP-N-acetyl-alpha-D-glucosamine: step 3/6. Catalyzes the N-acylation of UDP-3-O-(hydroxytetradecanoyl)glucosamine using 3-hydroxytetradecanoyl-ACP as the acyl donor. Is involved in the biosynthesis of lipid A, a phosphorylated glycolipid that anchors the lipopolysaccharide to the outer membrane of the cell. This chain is UDP-3-O-(3-hydroxymyristoyl)glucosamine N-acyltransferase, found in Blochmanniella floridana.